A 297-amino-acid polypeptide reads, in one-letter code: Mitochondrial nicotinamide adenine dinucleotide transporter SLC25A51 (297 aa).

Residues Met-1–Pro-11 are compositionally biased toward basic and acidic residues. Positions Met-1–Asp-20 are disordered. 3 Solcar repeats span residues Val-28–Leu-108, Pro-116–His-200, and Asn-213–Val-296. Transmembrane regions (helical) follow at residues Cys-36–Phe-56, Leu-85–Leu-105, Pro-116–Phe-135, Ile-179–Glu-199, Phe-215–Val-235, and Leu-268–Thr-289.

It belongs to the mitochondrial carrier (TC 2.A.29) family.

The protein resides in the mitochondrion inner membrane. The enzyme catalyses NAD(+)(in) = NAD(+)(out). Its function is as follows. Mitochondrial membrane carrier protein that mediates the import of NAD(+) into mitochondria. Mitochondrial NAD(+) is required for glycolysis and mitochondrial respiration. Compared to SLC25A52, SLC25A51-mediated transport is essential for the import of NAD(+) in mitochondria. The transport mechanism, uniport or antiport, its electrogenicity and substrate selectivity, remain to be elucidated. The chain is Mitochondrial nicotinamide adenine dinucleotide transporter SLC25A51 from Homo sapiens (Human).